Reading from the N-terminus, the 452-residue chain is Phosphoglucosamine mutase (452 aa).

Residue S97 is the Phosphoserine intermediate of the active site. Mg(2+) is bound by residues S97, D236, D238, and D240. At S97 the chain carries Phosphoserine.

It belongs to the phosphohexose mutase family. The cofactor is Mg(2+). Activated by phosphorylation.

The enzyme catalyses alpha-D-glucosamine 1-phosphate = D-glucosamine 6-phosphate. Its function is as follows. Catalyzes the conversion of glucosamine-6-phosphate to glucosamine-1-phosphate. The polypeptide is Phosphoglucosamine mutase (Prochlorococcus marinus (strain MIT 9515)).